Consider the following 245-residue polypeptide: PF03932 family protein CutC (245 aa).

The protein belongs to the CutC family.

The protein localises to the cytoplasm. This is PF03932 family protein CutC from Photobacterium profundum (strain SS9).